The following is a 201-amino-acid chain: uncharacterized protein (201 aa).

A helical membrane pass occupies residues isoleucine 11–leucine 31.

The protein localises to the membrane. This is an uncharacterized protein from Acanthamoeba polyphaga mimivirus (APMV).